A 219-amino-acid polypeptide reads, in one-letter code: Guanylate kinase (219 aa).

Residues 15–194 (GLMFVLSSPS…AFAEVQSILK (180 aa)) enclose the Guanylate kinase-like domain. 22–29 (SPSGAGKT) provides a ligand contact to ATP.

Belongs to the guanylate kinase family.

It localises to the cytoplasm. The catalysed reaction is GMP + ATP = GDP + ADP. In terms of biological role, essential for recycling GMP and indirectly, cGMP. This chain is Guanylate kinase, found in Bradyrhizobium diazoefficiens (strain JCM 10833 / BCRC 13528 / IAM 13628 / NBRC 14792 / USDA 110).